We begin with the raw amino-acid sequence, 368 residues long: UDP-N-acetylglucosamine--N-acetylmuramyl-(pentapeptide) pyrophosphoryl-undecaprenol N-acetylglucosamine transferase (368 aa).

Residues 10–12 (TGG), Asn-126, Ser-200, Ile-255, and Gln-300 contribute to the UDP-N-acetyl-alpha-D-glucosamine site.

This sequence belongs to the glycosyltransferase 28 family. MurG subfamily.

It is found in the cell membrane. It carries out the reaction Mur2Ac(oyl-L-Ala-gamma-D-Glu-L-Lys-D-Ala-D-Ala)-di-trans,octa-cis-undecaprenyl diphosphate + UDP-N-acetyl-alpha-D-glucosamine = beta-D-GlcNAc-(1-&gt;4)-Mur2Ac(oyl-L-Ala-gamma-D-Glu-L-Lys-D-Ala-D-Ala)-di-trans,octa-cis-undecaprenyl diphosphate + UDP + H(+). It functions in the pathway cell wall biogenesis; peptidoglycan biosynthesis. Cell wall formation. Catalyzes the transfer of a GlcNAc subunit on undecaprenyl-pyrophosphoryl-MurNAc-pentapeptide (lipid intermediate I) to form undecaprenyl-pyrophosphoryl-MurNAc-(pentapeptide)GlcNAc (lipid intermediate II). The protein is UDP-N-acetylglucosamine--N-acetylmuramyl-(pentapeptide) pyrophosphoryl-undecaprenol N-acetylglucosamine transferase of Lactobacillus acidophilus (strain ATCC 700396 / NCK56 / N2 / NCFM).